Here is a 130-residue protein sequence, read N- to C-terminus: Small ribosomal subunit protein uS11 (130 aa).

The protein belongs to the universal ribosomal protein uS11 family. Part of the 30S ribosomal subunit. Interacts with proteins S7 and S18. Binds to IF-3.

Located on the platform of the 30S subunit, it bridges several disparate RNA helices of the 16S rRNA. Forms part of the Shine-Dalgarno cleft in the 70S ribosome. In Caldicellulosiruptor bescii (strain ATCC BAA-1888 / DSM 6725 / KCTC 15123 / Z-1320) (Anaerocellum thermophilum), this protein is Small ribosomal subunit protein uS11.